Consider the following 234-residue polypeptide: tRNA (guanine-N(1)-)-methyltransferase (234 aa).

Residues Gly110 and 134-139 contribute to the S-adenosyl-L-methionine site; that span reads IGDYVL.

This sequence belongs to the RNA methyltransferase TrmD family. Homodimer.

It is found in the cytoplasm. The catalysed reaction is guanosine(37) in tRNA + S-adenosyl-L-methionine = N(1)-methylguanosine(37) in tRNA + S-adenosyl-L-homocysteine + H(+). Functionally, specifically methylates guanosine-37 in various tRNAs. This is tRNA (guanine-N(1)-)-methyltransferase from Tropheryma whipplei (strain Twist) (Whipple's bacillus).